Consider the following 279-residue polypeptide: Ribose-phosphate pyrophosphokinase (279 aa).

Residues 31-33 (DGE) and 88-89 (RQ) each bind ATP. His-121 and Asp-159 together coordinate Mg(2+). Residue Lys-182 is part of the active site. Residues Arg-184, Asp-208, and 212-216 (STGGT) contribute to the D-ribose 5-phosphate site.

This sequence belongs to the ribose-phosphate pyrophosphokinase family. Class III (archaeal) subfamily. Requires Mg(2+) as cofactor.

The protein localises to the cytoplasm. The catalysed reaction is D-ribose 5-phosphate + ATP = 5-phospho-alpha-D-ribose 1-diphosphate + AMP + H(+). Its pathway is metabolic intermediate biosynthesis; 5-phospho-alpha-D-ribose 1-diphosphate biosynthesis; 5-phospho-alpha-D-ribose 1-diphosphate from D-ribose 5-phosphate (route I): step 1/1. Functionally, involved in the biosynthesis of the central metabolite phospho-alpha-D-ribosyl-1-pyrophosphate (PRPP) via the transfer of pyrophosphoryl group from ATP to 1-hydroxyl of ribose-5-phosphate (Rib-5-P). This Pyrococcus furiosus (strain ATCC 43587 / DSM 3638 / JCM 8422 / Vc1) protein is Ribose-phosphate pyrophosphokinase.